The following is a 381-amino-acid chain: MKENELKNEKSVDVLSFKQLESQKIVLPQDLFRSSFTWFCYEIYKSLAFRIWMLLWLPLSVWWKLSNNCIYPLIVSLLVLFLGPIFVLVICGLSRKRSLSKQLIQFCKEVTENTPSSDPHDWEVVAANLNSYLYENKAWNTKYFFFNAMVCQEAFRTTLLEPFSLKKDEAAKVKSFKDSVPYIEEALGVYFREVEKQWKLFNSEKSWSPVGLEDAKLPKEAYRFKLTWFLKRISNIFMLIPFLNFLCCIYVSRGMCLLLRTFYLGWILFMLVQGFQNMRMIVLSVKMEHKMQFLSTIINEQESGANGWDEIAKKMNRYLFEKKVWKNEEFFFDGIDCEWFFSHFFYRVLSAKKSMRALSLNVELWPYIKEAQLSCSEESLA.

Topologically, residues 1–42 (MKENELKNEKSVDVLSFKQLESQKIVLPQDLFRSSFTWFCYE) are cytoplasmic. The chain crosses the membrane as a helical span at residues 43–63 (IYKSLAFRIWMLLWLPLSVWW). Residues 64–72 (KLSNNCIYP) lie on the Extracellular side of the membrane. Residues 73–93 (LIVSLLVLFLGPIFVLVICGL) traverse the membrane as a helical segment. Topologically, residues 94–231 (SRKRSLSKQL…YRFKLTWFLK (138 aa)) are cytoplasmic. A helical transmembrane segment spans residues 232-252 (RISNIFMLIPFLNFLCCIYVS). The Extracellular portion of the chain corresponds to 253–254 (RG). Residues 255-275 (MCLLLRTFYLGWILFMLVQGF) traverse the membrane as a helical segment. Residues 276–381 (QNMRMIVLSV…QLSCSEESLA (106 aa)) lie on the Cytoplasmic side of the membrane.

This sequence belongs to the DUP/COS family.

It is found in the membrane. This chain is Protein COS1 (COS1), found in Saccharomyces cerevisiae (strain ATCC 204508 / S288c) (Baker's yeast).